The sequence spans 238 residues: Chromosome partition protein MukE (238 aa).

Residues 206–238 form a disordered region; the sequence is EESSQSSFDLDENEKLSDISAEEQHELELEGDA. Positions 218-238 are enriched in basic and acidic residues; that stretch reads NEKLSDISAEEQHELELEGDA.

It belongs to the MukE family. Interacts, and probably forms a ternary complex, with MukF and MukB. The complex formation is stimulated by calcium or magnesium.

It is found in the cytoplasm. The protein localises to the nucleoid. Its function is as follows. Involved in chromosome condensation, segregation and cell cycle progression. May participate in facilitating chromosome segregation by condensation DNA from both sides of a centrally located replisome during cell division. Probably acts via its interaction with MukB and MukF. The protein is Chromosome partition protein MukE of Aliivibrio salmonicida (strain LFI1238) (Vibrio salmonicida (strain LFI1238)).